We begin with the raw amino-acid sequence, 559 residues long: Dihydroxy-acid dehydratase (559 aa).

Mg(2+) is bound at residue D78. Residue C119 coordinates [2Fe-2S] cluster. Mg(2+) is bound by residues D120 and K121. The residue at position 121 (K121) is an N6-carboxylysine. C191 contributes to the [2Fe-2S] cluster binding site. E442 contacts Mg(2+). The active-site Proton acceptor is S468.

The protein belongs to the IlvD/Edd family. In terms of assembly, homodimer. It depends on [2Fe-2S] cluster as a cofactor. Mg(2+) serves as cofactor.

It catalyses the reaction (2R)-2,3-dihydroxy-3-methylbutanoate = 3-methyl-2-oxobutanoate + H2O. It carries out the reaction (2R,3R)-2,3-dihydroxy-3-methylpentanoate = (S)-3-methyl-2-oxopentanoate + H2O. It participates in amino-acid biosynthesis; L-isoleucine biosynthesis; L-isoleucine from 2-oxobutanoate: step 3/4. Its pathway is amino-acid biosynthesis; L-valine biosynthesis; L-valine from pyruvate: step 3/4. In terms of biological role, functions in the biosynthesis of branched-chain amino acids. Catalyzes the dehydration of (2R,3R)-2,3-dihydroxy-3-methylpentanoate (2,3-dihydroxy-3-methylvalerate) into 2-oxo-3-methylpentanoate (2-oxo-3-methylvalerate) and of (2R)-2,3-dihydroxy-3-methylbutanoate (2,3-dihydroxyisovalerate) into 2-oxo-3-methylbutanoate (2-oxoisovalerate), the penultimate precursor to L-isoleucine and L-valine, respectively. The polypeptide is Dihydroxy-acid dehydratase (Agathobacter rectalis (strain ATCC 33656 / DSM 3377 / JCM 17463 / KCTC 5835 / VPI 0990) (Eubacterium rectale)).